Here is a 160-residue protein sequence, read N- to C-terminus: Endoribonuclease YbeY (160 aa).

Zn(2+) is bound by residues histidine 127, histidine 131, and histidine 137.

This sequence belongs to the endoribonuclease YbeY family. Zn(2+) is required as a cofactor.

It is found in the cytoplasm. Its function is as follows. Single strand-specific metallo-endoribonuclease involved in late-stage 70S ribosome quality control and in maturation of the 3' terminus of the 16S rRNA. The chain is Endoribonuclease YbeY from Synechococcus sp. (strain RCC307).